Here is a 716-residue protein sequence, read N- to C-terminus: Beta-1,2-glucosyltransferase (716 aa).

Sophorose-binding residues include Tyr-52, Ile-99, Ala-101, Glu-102, Asn-175, Glu-176, Gly-278, Trp-279, Glu-343, and Arg-349. Glu-176 functions as the Proton donor/acceptor in the catalytic mechanism. Glu-176, Gly-278, and Trp-279 together coordinate beta-D-glucose. Residue Glu-343 is the Nucleophile of the active site. Beta-D-glucose is bound by residues Arg-349, Lys-358, and Glu-361. Residue Tyr-378 coordinates sophorose. Residues Ser-708 and Tyr-709 each contribute to the beta-D-glucose site.

This sequence belongs to the glycosyl hydrolase 35 family. Homidimer.

It is found in the cytoplasm. The catalysed reaction is a D-glucoside + [(1-&gt;2)-beta-D-glucosyl](n) = a beta-D-glucosyl-(1-&gt;2)-D-glucoside + [(1-&gt;2)-beta-D-glucosyl](n-1). Its function is as follows. Glycosyltransferase acting on beta-1,2-glucooligosaccharides. Catalyzes the transfer of a glucosyl residue from the non-reducing end of a 1,2-beta-D-glucan to a glucose residue of an acceptor molecule, forming a beta-1,2-glucosidic bond. The beta-1,2-linked glucose dimer sophorose is the preferred donor in vitro. Has a very broad specificity for the acceptor and can act on various aryl- and alkyl-glucosides. Does not show any hydrolytic activity. This chain is Beta-1,2-glucosyltransferase, found in Ignavibacterium album (strain DSM 19864 / JCM 16511 / NBRC 101810 / Mat9-16).